The chain runs to 298 residues: tRNA dimethylallyltransferase (298 aa).

16–23 (GPTASGKS) lines the ATP pocket. 18-23 (TASGKS) is a substrate binding site. Interaction with substrate tRNA regions lie at residues 41–44 (DSMQ) and 165–169 (QRIVR).

Belongs to the IPP transferase family. In terms of assembly, monomer. It depends on Mg(2+) as a cofactor.

The catalysed reaction is adenosine(37) in tRNA + dimethylallyl diphosphate = N(6)-dimethylallyladenosine(37) in tRNA + diphosphate. Its function is as follows. Catalyzes the transfer of a dimethylallyl group onto the adenine at position 37 in tRNAs that read codons beginning with uridine, leading to the formation of N6-(dimethylallyl)adenosine (i(6)A). This is tRNA dimethylallyltransferase from Rhizobium radiobacter (Agrobacterium tumefaciens).